Here is a 223-residue protein sequence, read N- to C-terminus: Cytidylate kinase (223 aa).

12-20 (GPSGVGKGT) is a binding site for ATP.

Belongs to the cytidylate kinase family. Type 1 subfamily.

It localises to the cytoplasm. It catalyses the reaction CMP + ATP = CDP + ADP. The enzyme catalyses dCMP + ATP = dCDP + ADP. The polypeptide is Cytidylate kinase (Xylella fastidiosa (strain 9a5c)).